The sequence spans 150 residues: MKKYTRQRLILDLIEENEIRTQEELSDYLEAHGVRATQATISRDIKELRISKVQTREGEYHYAIIDTVHDSLNERLDKIFRSAVLTIKHNEDMVIIKTISHTATVCGMAITNAKLDNIAGILTGNDTIYITVEDKSGLEKLVSEIKSIIR.

It belongs to the ArgR family.

Its subcellular location is the cytoplasm. It participates in amino-acid biosynthesis; L-arginine biosynthesis [regulation]. Functionally, regulates arginine biosynthesis genes. This is Arginine repressor from Finegoldia magna (strain ATCC 29328 / DSM 20472 / WAL 2508) (Peptostreptococcus magnus).